The following is a 181-amino-acid chain: Nucleoside triphosphate/diphosphate phosphatase (181 aa).

Arginine 26 serves as the catalytic Proton donor. Mg(2+) contacts are provided by asparagine 90, aspartate 106, aspartate 108, aspartate 110, aspartate 123, and glutamate 126.

It belongs to the Ntdp family. Requires Mg(2+) as cofactor.

The catalysed reaction is a ribonucleoside 5'-triphosphate + H2O = a ribonucleoside 5'-diphosphate + phosphate + H(+). It carries out the reaction a ribonucleoside 5'-diphosphate + H2O = a ribonucleoside 5'-phosphate + phosphate + H(+). Its function is as follows. Has nucleoside phosphatase activity towards nucleoside triphosphates and nucleoside diphosphates. In Staphylococcus carnosus (strain TM300), this protein is Nucleoside triphosphate/diphosphate phosphatase.